We begin with the raw amino-acid sequence, 417 residues long: NADH-quinone oxidoreductase subunit D (417 aa).

It belongs to the complex I 49 kDa subunit family. As to quaternary structure, NDH-1 is composed of 14 different subunits. Subunits NuoB, C, D, E, F, and G constitute the peripheral sector of the complex.

It is found in the cell inner membrane. The catalysed reaction is a quinone + NADH + 5 H(+)(in) = a quinol + NAD(+) + 4 H(+)(out). Its function is as follows. NDH-1 shuttles electrons from NADH, via FMN and iron-sulfur (Fe-S) centers, to quinones in the respiratory chain. The immediate electron acceptor for the enzyme in this species is believed to be ubiquinone. Couples the redox reaction to proton translocation (for every two electrons transferred, four hydrogen ions are translocated across the cytoplasmic membrane), and thus conserves the redox energy in a proton gradient. This is NADH-quinone oxidoreductase subunit D from Coxiella burnetii (strain Dugway 5J108-111).